Here is a 293-residue protein sequence, read N- to C-terminus: 1D-myo-inositol 2-acetamido-2-deoxy-alpha-D-glucopyranoside deacetylase (293 aa).

Positions 16, 19, and 156 each coordinate Zn(2+).

Belongs to the MshB deacetylase family. Requires Zn(2+) as cofactor.

It catalyses the reaction 1D-myo-inositol 2-acetamido-2-deoxy-alpha-D-glucopyranoside + H2O = 1D-myo-inositol 2-amino-2-deoxy-alpha-D-glucopyranoside + acetate. Functionally, catalyzes the deacetylation of 1D-myo-inositol 2-acetamido-2-deoxy-alpha-D-glucopyranoside (GlcNAc-Ins) in the mycothiol biosynthesis pathway. The polypeptide is 1D-myo-inositol 2-acetamido-2-deoxy-alpha-D-glucopyranoside deacetylase (Nakamurella multipartita (strain ATCC 700099 / DSM 44233 / CIP 104796 / JCM 9543 / NBRC 105858 / Y-104) (Microsphaera multipartita)).